The chain runs to 353 residues: Inactive ubiquitin thioesterase OTULINL (353 aa).

The tract at residues Met1 to Lys80 is required for membrane binding. The region spanning Lys125–Phe353 is the OTU domain.

The protein belongs to the peptidase C65 family. Otulin subfamily. In terms of assembly, does not bind ubiquitin or ubiquitin-like proteins.

The protein resides in the cytoplasm. It localises to the endoplasmic reticulum membrane. The protein localises to the nucleus envelope. Functionally, lacks deubiquitinase activity. The chain is Inactive ubiquitin thioesterase OTULINL from Rattus norvegicus (Rat).